The chain runs to 319 residues: mRNA decay activator protein ZFP36 (319 aa).

Positions 1–15 (MDLSAIYESLQSMSH) are necessary for nuclear export. The segment at 1-92 (MDLSAIYESL…PTSPTATPTT (92 aa)) is necessary and sufficient for the association with mRNA decay enzymes and mRNA decay activation. Necessary for localization of ARE-containing mRNAs to processing bodies (PBs) stretches follow at residues 1–166 (MDLS…DLAL) and 92–319 (TSSR…SVSE). A Phosphoserine; by MAPKAPK2 modification is found at S52. Residue S58 is modified to Phosphoserine. One copy of the P-P-P-P-G repeat lies at 63–67 (PPPPG). Residues 65–84 (PPGFAPLAPRPGPELSPSPT) show a composition bias toward pro residues. Residues 65–95 (PPGFAPLAPRPGPELSPSPTSPTATPTTSSR) form a disordered region. Phosphoserine is present on residues S80 and S82. T84 is modified (phosphothreonine). S85 carries the post-translational modification Phosphoserine. The segment covering 85–94 (SPTATPTTSS) has biased composition (low complexity). Residues 87 to 160 (TATPTTSSRY…GSRCHFIHNP (74 aa)) form a necessary for nuclear localization region. The tract at residues 89–165 (TPTTSSRYKT…FIHNPTEDLA (77 aa)) is necessary for RNA-binding. C3H1-type zinc fingers lie at residues 95 to 123 (RYKTELCRTYSESGRCRYGAKCQFAHGLG) and 133 to 161 (KYKTELCHKFYLQGRCPYGSRCHFIHNPT). The interval 95–186 (RYKTELCRTY…ISFSGLPSGR (92 aa)) is necessary for interaction with PABPN1. The interval 166-319 (LPGQPHVLRQ…PIFNRISVSE (154 aa)) is necessary for mRNA decay activation. Phosphoserine; by MAPKAPK2 is present on S178. The segment covering 179 to 188 (FSGLPSGRRS) has biased composition (low complexity). A disordered region spans residues 179-309 (FSGLPSGRRS…PQTPAPPRRL (131 aa)). S189 bears the Phosphoserine mark. Residues 190–194 (PPPPG) form a P-P-P-P-G repeat. Over residues 196–208 (SGPSLSSCSFSPS) the composition is skewed to low complexity. S210 carries the post-translational modification Phosphoserine. The stretch at 211–215 (PPPPG) is one P-P-P-P-G repeat. Position 220 is a phosphoserine; by MAPK1; in vitro (S220). A Phosphothreonine modification is found at T250. 3 positions are modified to phosphoserine: S269, S289, and S316. The span at 279–289 (SSGSSLGGSDS) shows a compositional bias: low complexity. Residues 305-319 (PPRRLPIFNRISVSE) are interaction with CNOT1.

In terms of assembly, associates with cytoplasmic CCR4-NOT and PAN2-PAN3 deadenylase complexes to trigger ARE-containing mRNA deadenylation and decay processes. Part of a mRNA decay activation complex at least composed of poly(A)-specific exoribonucleases CNOT6, EXOSC2 and XRN1 and mRNA-decapping enzymes DCP1A and DCP2. Associates with the RNA exosome complex. Interacts (via phosphorylated form) with 14-3-3 proteins; these interactions promote exclusion of ZFP36 from cytoplasmic stress granules in response to arsenite treatment in a MAPKAPK2-dependent manner and does not prevent CCR4-NOT deadenylase complex recruitment or ZFP36-induced ARE-containing mRNA deadenylation and decay processes. Interacts with 14-3-3 proteins; these interactions occur in response to rapamycin in an Akt-dependent manner. Interacts with AGO2 and AGO4. Interacts (via C-terminus) with CNOT1; this interaction occurs in a RNA-independent manner and induces mRNA deadenylation. Interacts (via N-terminus) with CNOT6. Interacts with CNOT6L. Interacts (via C-terminus) with CNOT7; this interaction occurs in a RNA-independent manner, induces mRNA deadenylation and is inhibited in a phosphorylation MAPKAPK2-dependent manner. Interacts (via unphosphorylated form) with CNOT8; this interaction occurs in a RNA-independent manner and is inhibited in a phosphorylation MAPKAPK2-dependent manner. Interacts with DCP1A. Interacts (via N-terminus) with DCP2. Interacts with EDC3. Interacts (via N-terminus) with EXOSC2. Interacts with heat shock 70 kDa proteins. Interacts with KHSRP; this interaction increases upon cytokine-induced treatment. Interacts with MAP3K4; this interaction enhances the association with SH3KBP1/CIN85. Interacts with MAPKAPK2; this interaction occurs upon skeletal muscle satellite cell activation. Interacts with NCL. Interacts with NUP214; this interaction increases upon lipopolysaccharide (LPS) stimulation. Interacts with PABPC1; this interaction occurs in a RNA-dependent manner. Interacts (via hypophosphorylated form) with PABPN1 (via RRM domain and C-terminal arginine-rich region); this interaction occurs in the nucleus in a RNA-independent manner, decreases in presence of single-stranded poly(A) RNA-oligomer and in a p38 MAPK-dependent-manner and inhibits nuclear poly(A) tail synthesis. Interacts with PAN2. Interacts (via C3H1-type zinc finger domains) with PKM. Interacts (via C3H1-type zinc finger domains) with nuclear RNA poly(A) polymerase. Interacts with PPP2CA; this interaction occurs in LPS-stimulated cells and induces ZFP36 dephosphorylation, and hence may promote ARE-containing mRNAs decay. Interacts (via C-terminus) with PRR5L (via C-terminus); this interaction may accelerate ZFP36-mediated mRNA decay during stress. Interacts (via C-terminus) with SFN; this interaction occurs in a phosphorylation-dependent manner. Interacts (via extreme C-terminal region) with SH3KBP1/CIN85 (via SH3 domains); this interaction enhances MAP3K4-induced phosphorylation of ZFP36 at Ser-58 and Ser-85 and does not alter neither ZFP36 binding to ARE-containing transcripts nor TNF-alpha mRNA decay. Interacts with XRN1. Interacts (via C-terminus and Ser-178 phosphorylated form) with YWHAB; this interaction occurs in a p38/MAPKAPK2-dependent manner, increases cytoplasmic localization of ZFP36 and protects ZFP36 from Ser-178 dephosphorylation by serine/threonine phosphatase 2A, and hence may be crucial for stabilizing ARE-containing mRNAs. Interacts (via phosphorylated form) with YWHAE. Interacts (via C-terminus) with YWHAG; this interaction occurs in a phosphorylation-dependent manner. Interacts with YWHAH; this interaction occurs in a phosphorylation-dependent manner. Interacts with YWHAQ; this interaction occurs in a phosphorylation-dependent manner. Interacts with (via C-terminus) YWHAZ; this interaction occurs in a phosphorylation-dependent manner. Does not interact with SH3KBP1. Interacts (via the 4EHP-binding motif) with EIF4E2; the interaction is direct. Interacts (via P-P-P-P-G repeats) with GIGYF2; the interaction is direct. Phosphorylated. Phosphorylation at serine and/or threonine residues occurs in a p38 MAPK- and MAPKAPK2-dependent manner. Phosphorylated by MAPKAPK2 at Ser-52 and Ser-178; phosphorylation increases its stability and cytoplasmic localization, promotes binding to 14-3-3 adapter proteins and inhibits the recruitment of cytoplasmic CCR4-NOT and PAN2-PAN3 deadenylase complexes to the mRNA decay machinery, thereby inhibiting ZFP36-induced ARE-containing mRNA deadenylation and decay processes. Phosphorylation by MAPKAPK2 does not impair ARE-containing RNA-binding. Phosphorylated in a MAPKAPK2- and p38 MAPK-dependent manner upon skeletal muscle satellite cell activation; this phosphorylation inhibits ZFP36-mediated mRNA decay activity, and hence stabilizes MYOD1 mRNA. Phosphorylated by MAPK1 upon mitogen stimulation. Phosphorylated at Ser-58 and Ser-85; these phosphorylations increase in a SH3KBP1-dependent manner. Phosphorylated at serine and threonine residues in a pyruvate kinase PKM- and p38 MAPK-dependent manner. Phosphorylation at Ser-52 may participate in the PKM-mediated degradation of ZFP36 in a p38 MAPK-dependent manner. Dephosphorylated by serine/threonine phosphatase 2A at Ser-178. In terms of processing, ubiquitinated; pyruvate kinase (PKM)-dependent ubiquitination leads to proteasomal degradation through a p38 MAPK signaling pathway. Expressed in skeletal muscle satellite cells. Strongly expressed in differentiated adipocytes compared to preadipocytes (at protein level). Expressed in embryonic stem cells (ESCs). Expressed in heart, placenta, kidney, intestine, liver, lung, thymus, fat and spleen.

It is found in the nucleus. Its subcellular location is the cytoplasm. The protein resides in the cytoplasmic granule. It localises to the P-body. Its function is as follows. Zinc-finger RNA-binding protein that destabilizes numerous cytoplasmic AU-rich element (ARE)-containing mRNA transcripts by promoting their poly(A) tail removal or deadenylation, and hence provide a mechanism for attenuating protein synthesis. Acts as an 3'-untranslated region (UTR) ARE mRNA-binding adapter protein to communicate signaling events to the mRNA decay machinery. Recruits deadenylase CNOT7 (and probably the CCR4-NOT complex) via association with CNOT1, and hence promotes ARE-mediated mRNA deadenylation. Also functions by recruiting components of the cytoplasmic RNA decay machinery to the bound ARE-containing mRNAs. Self-regulates by destabilizing its own mRNA. Binds to 3'-UTR ARE of numerous mRNAs and of its own mRNA. Plays a role in anti-inflammatory responses; suppresses tumor necrosis factor (TNF)-alpha production by stimulating ARE-mediated TNF-alpha mRNA decay and several other inflammatory ARE-containing mRNAs in interferon (IFN)- and/or lipopolysaccharide (LPS)-induced macrophages. Also plays a role in the regulation of dendritic cell maturation at the post-transcriptional level, and hence operates as part of a negative feedback loop to limit the inflammatory response. Promotes ARE-mediated mRNA decay of hypoxia-inducible factor HIF1A mRNA during the response of endothelial cells to hypoxia. Positively regulates early adipogenesis of preadipocytes by promoting ARE-mediated mRNA decay of immediate early genes (IEGs). Negatively regulates hematopoietic/erythroid cell differentiation by promoting ARE-mediated mRNA decay of the transcription factor STAT5B mRNA. Plays a role in maintaining skeletal muscle satellite cell quiescence by promoting ARE-mediated mRNA decay of the myogenic determination factor MYOD1 mRNA. Also associates with and regulates the expression of non-ARE-containing target mRNAs at the post-transcriptional level, such as MHC class I mRNAs. Participates in association with argonaute RISC catalytic components in the ARE-mediated mRNA decay mechanism; assists microRNA (miRNA) targeting ARE-containing mRNAs. May also play a role in the regulation of cytoplasmic mRNA decapping; enhances decapping of ARE-containing RNAs, in vitro. Involved in the delivery of target ARE-mRNAs to processing bodies (PBs). In addition to its cytosolic mRNA-decay function, affects nuclear pre-mRNA processing. Negatively regulates nuclear poly(A)-binding protein PABPN1-stimulated polyadenylation activity on ARE-containing pre-mRNA during LPS-stimulated macrophages. Also involved in the regulation of stress granule (SG) and P-body (PB) formation and fusion. Plays a role in the regulation of keratinocyte proliferation, differentiation and apoptosis. Plays a role as a tumor suppressor by inhibiting cell proliferation in breast cancer cells. The protein is mRNA decay activator protein ZFP36 of Mus musculus (Mouse).